We begin with the raw amino-acid sequence, 265 residues long: MWIHPMPDPVALSIGPLAIRWYGLMYLAAFAQFIWLARIRIKQPHIARAGWKKEDIDDMLFYGVLGVIIGGRLGEVLFYDPSYYFSNPLEIFKVWKGGMSFHGGFLGVLLAMSIWARRQGRNVLDVWDFIAPMVPLGYAFGRLGNFINAELPGRIADASLPWAMIWPNVDNLPRHPSPLYQALVDGLLMFILLWLFARKERPRMAVGGMFALLYGSARFFTEYFRMPDYEVHFAGITISAGQMLSVPLIVLGIVMLLIAYRKKPA.

The next 7 membrane-spanning stretches (helical) occupy residues 17–37 (LAIR…IWLA), 59–79 (MLFY…VLFY), 94–114 (VWKG…AMSI), 123–143 (VLDV…FGRL), 177–197 (SPLY…WLFA), 204–224 (MAVG…TEYF), and 238–258 (ISAG…MLLI). An a 1,2-diacyl-sn-glycero-3-phospho-(1'-sn-glycerol)-binding site is contributed by Arg-142.

The protein belongs to the Lgt family.

It localises to the cell inner membrane. It catalyses the reaction L-cysteinyl-[prolipoprotein] + a 1,2-diacyl-sn-glycero-3-phospho-(1'-sn-glycerol) = an S-1,2-diacyl-sn-glyceryl-L-cysteinyl-[prolipoprotein] + sn-glycerol 1-phosphate + H(+). It functions in the pathway protein modification; lipoprotein biosynthesis (diacylglyceryl transfer). Functionally, catalyzes the transfer of the diacylglyceryl group from phosphatidylglycerol to the sulfhydryl group of the N-terminal cysteine of a prolipoprotein, the first step in the formation of mature lipoproteins. The chain is Phosphatidylglycerol--prolipoprotein diacylglyceryl transferase from Janthinobacterium sp. (strain Marseille) (Minibacterium massiliensis).